The following is an 857-amino-acid chain: DNA mismatch repair protein MutS (857 aa).

603–610 (GPNMAGKS) is an ATP binding site.

It belongs to the DNA mismatch repair MutS family.

Its function is as follows. This protein is involved in the repair of mismatches in DNA. It is possible that it carries out the mismatch recognition step. This protein has a weak ATPase activity. In Methanothrix thermoacetophila (strain DSM 6194 / JCM 14653 / NBRC 101360 / PT) (Methanosaeta thermophila), this protein is DNA mismatch repair protein MutS.